The primary structure comprises 68 residues: Beta-defensin 1 (68 aa).

The signal sequence occupies residues 1–21 (MRTSYLLLFILCLVLCDMDSG). Residues 22–32 (DTFLTGLGHRS) constitute a propeptide that is removed on maturation. 3 cysteine pairs are disulfide-bonded: cysteine 37–cysteine 66, cysteine 44–cysteine 59, and cysteine 49–cysteine 67.

It belongs to the beta-defensin family. As to quaternary structure, monomer. Homodimer.

The protein resides in the secreted. Its subcellular location is the membrane. Functionally, has bactericidal activity. May act as a ligand for C-C chemokine receptor CCR6. Positively regulates the sperm motility and bactericidal activity in a CCR6-dependent manner. Binds to CCR6 and triggers Ca2+ mobilization in the sperm which is important for its motility. The chain is Beta-defensin 1 (DEFB1) from Saguinus oedipus (Cotton-top tamarin).